The following is a 286-amino-acid chain: Bifunctional protein FolD (286 aa).

Residues 165-167 (GRS) and S190 contribute to the NADP(+) site.

The protein belongs to the tetrahydrofolate dehydrogenase/cyclohydrolase family. Homodimer.

It carries out the reaction (6R)-5,10-methylene-5,6,7,8-tetrahydrofolate + NADP(+) = (6R)-5,10-methenyltetrahydrofolate + NADPH. The catalysed reaction is (6R)-5,10-methenyltetrahydrofolate + H2O = (6R)-10-formyltetrahydrofolate + H(+). The protein operates within one-carbon metabolism; tetrahydrofolate interconversion. In terms of biological role, catalyzes the oxidation of 5,10-methylenetetrahydrofolate to 5,10-methenyltetrahydrofolate and then the hydrolysis of 5,10-methenyltetrahydrofolate to 10-formyltetrahydrofolate. The chain is Bifunctional protein FolD from Staphylococcus aureus (strain USA300).